A 584-amino-acid polypeptide reads, in one-letter code: Cation channel sperm-associated protein 2 (584 aa).

Residues 1-106 lie on the Cytoplasmic side of the membrane; sequence MAHERGHLQL…LWAGWVLDSS (106 aa). A helical transmembrane segment spans residues 107–129; sequence IFSNFIISLIFLNTFVLMVEIEL. The Extracellular portion of the chain corresponds to 130–138; it reads MNSTNTSLW. Residues 139-164 form a helical membrane-spanning segment; sequence PLKLALEVTDWFILLSFIVEILLMWL. Residues 165–173 lie on the Cytoplasmic side of the membrane; that stretch reads ASFFLFWKN. Residues 174 to 198 traverse the membrane as a helical segment; it reads AWSVFDFVVTMLSLLPEFVVLIGVS. Over 199 to 201 the chain is Extracellular; it reads ADS. Residues 202 to 220 form a helical membrane-spanning segment; the sequence is VWLQLLRVSRVLRSLKLFA. Over 221–237 the chain is Cytoplasmic; it reads RFPQIKVILLALVRALK. The chain crosses the membrane as a helical span at residues 238 to 260; it reads SMTFLLMLLLIFFYVFAVAGVYF. Topologically, residues 261–279 are extracellular; that stretch reads FKEYSRSTIENLEYNMFFS. An intramembrane region (helical; Pore-forming) is located at residues 280-292; that stretch reads DLLNSLVTVFILF. Residues 293 to 312 are Extracellular-facing; it reads TLDHWYAVLQDVWKVPEASR. The chain crosses the membrane as a helical span at residues 313 to 339; the sequence is VFSSIYVILWLLLGSIIFRNIIVAMMV. The Cytoplasmic portion of the chain corresponds to 340–584; it reads TNFQNIRNEL…VQALMNFEDK (245 aa). The segment covering 376 to 386 has biased composition (polar residues); sequence SESLRGTSQGK. Disordered stretches follow at residues 376–460 and 480–510; these read SESL…KGYT and AGKAENEKVQKELKEKAYPGSPPNSSSHDEA. Composition is skewed to acidic residues over residues 390 to 418 and 426 to 443; these read DITETSEATDEEKSEAEESEEEKSEEEKS and EKNDEEKSDEEENDEEKS. Composition is skewed to basic and acidic residues over residues 444–460 and 483–496; these read DVEKSDEEKNDEEKGYT and AENEKVQKELKEKA.

This sequence belongs to the cation channel sperm-associated (TC 1.A.1.19) family. As to quaternary structure, component of the CatSper complex or CatSpermasome composed of the core pore-forming members CATSPER1, CATSPER2, CATSPER3 and CATSPER4 as well as auxiliary members CATSPERB, CATSPERG, CATSPERD, CATSPERE, CATSPERZ, C2CD6/CATSPERT, SLCO6C1, TMEM249, TMEM262 and EFCAB9. HSPA1 may be an additional auxiliary complex member. The core complex members CATSPER1, CATSPER2, CATSPER3 and CATSPER4 form a heterotetrameric channel. The auxiliary CATSPERB, CATSPERG, CATSPERD and CATSPERE subunits form a pavilion-like structure over the pore which stabilizes the complex through interactions with CATSPER4, CATSPER3, CATSPER1 and CATSPER2 respectively. SLCO6C1 interacts with CATSPERE and TMEM262/CATSPERH interacts with CATSPERB, further stabilizing the complex. C2CD6/CATSPERT interacts at least with CATSPERD and is required for targeting the CatSper complex in the flagellar membrane. Interacts with Ca(v)3.3/CACNA1I, leading to suppression of T-type calcium channel activity.

It is found in the cell projection. It localises to the cilium. The protein resides in the flagellum membrane. The catalysed reaction is Ca(2+)(in) = Ca(2+)(out). With respect to regulation, activated by intracellular alkalinization. Functionally, pore-forming subunit of the CatSper complex, a sperm-specific voltage-gated calcium channel that plays a central role in sperm cell hyperactivation. Controls calcium entry to mediate the hyperactivated motility, a step needed for sperm motility which is essential late in the preparation of sperm for fertilization. The sequence is that of Cation channel sperm-associated protein 2 (Catsper2) from Rattus norvegicus (Rat).